The following is a 377-amino-acid chain: MYTFVVRDENSSVYAEVSRLLLATGYWKRLRRDNPRFNLMLGERNRLPFGRLGHEPGLAQLVNYYRGADKLCRKASLVKLVKTSPELSESCSWFPESYVIYPTNLKTPVAPAQNGIQLPVSNSRTDEREFFLASYNRKKEDGEGNVWIAKSSAGAKGEGILISSEASELLDFIDSQGQVHVIQKYLERPLLLEPGHRKFDIRSWVLVDHQYNIYLYREGVLRTASEPYHVDNFQDKTCHLTNHCIQKEYSKNYGKYEEGNEMFFEEFNQYLTSALNITLESSILLQIKHIIRSCLMSVEPAISTKHLPYQSFQLLGFDFMVDEELKVWLIEVNGAPACAQKLYAELCQGIVDIAISSVFPPPDTEQVPQQPAAFVKL.

The 368-residue stretch at 3–370 (TFVVRDENSS…PPDTEQVPQQ (368 aa)) folds into the TTL domain.

It belongs to the tubulin--tyrosine ligase family. In terms of assembly, monomer. It depends on Mg(2+) as a cofactor. K(+) serves as cofactor.

It catalyses the reaction C-terminal L-alpha-aminoacyl-L-glutamyl-L-glutamyl-[tubulin] + L-tyrosine + ATP = C-terminal L-alpha-aminoacyl-L-glutamyl-L-glutamyl-L-tyrosyl-[tubulin] + ADP + phosphate + H(+). Catalyzes the post-translational addition of a tyrosine to the C-terminal end of detyrosinated alpha-tubulin. This Mus musculus (Mouse) protein is Tubulin--tyrosine ligase (Ttl).